A 594-amino-acid polypeptide reads, in one-letter code: Zinc finger protein 703 (594 aa).

Over residues 1–14 (MSDSPAGSNPRTPE) the composition is skewed to polar residues. Disordered stretches follow at residues 1-37 (MSDS…VPAV), 100-298 (TCSQ…GHVA), and 345-370 (LVGG…LTGA). The residue at position 2 (serine 2) is an N-acetylserine. Positions 17 to 30 (GSGGGSSSGGGGGK) are enriched in gly residues. Low complexity-rich tracts occupy residues 134 to 145 (RSAPGAASAAAA), 177 to 191 (GSSS…SSSS), and 212 to 225 (GASV…SSPG). The segment covering 246-256 (ELDKKEQEAKP) has biased composition (basic and acidic residues). Serine 257 is modified (phosphoserine). The span at 345 to 356 (LVGGQLSGGLGL) shows a compositional bias: gly residues. A C2H2-type zinc finger spans residues 460–488 (HSCNWVAASGPCDKRFATSEELLSHLRTH). At arginine 584 the chain carries Omega-N-methylarginine.

This sequence belongs to the Elbow/Noc family. In terms of assembly, interacts with DCAF7 and PHB2. Interacts with TLE4; increases transcriptional repression. As to expression, expressed in mammary epithelium.

It is found in the nucleus. Its subcellular location is the cytoplasm. Functionally, transcriptional corepressor which does not bind directly to DNA and may regulate transcription through recruitment of histone deacetylases to gene promoters. Regulates cell adhesion, migration and proliferation. May be required for segmental gene expression during hindbrain development. The sequence is that of Zinc finger protein 703 (Znf703) from Mus musculus (Mouse).